We begin with the raw amino-acid sequence, 62 residues long: uncharacterized protein (62 aa).

A helical transmembrane segment spans residues 37-57 (FILGVILLGVIIESITLLVVY).

It localises to the membrane. This is an uncharacterized protein from Dictyostelium discoideum (Social amoeba).